We begin with the raw amino-acid sequence, 201 residues long: 3-isopropylmalate dehydratase small subunit (201 aa).

The protein belongs to the LeuD family. LeuD type 1 subfamily. As to quaternary structure, heterodimer of LeuC and LeuD.

It carries out the reaction (2R,3S)-3-isopropylmalate = (2S)-2-isopropylmalate. It functions in the pathway amino-acid biosynthesis; L-leucine biosynthesis; L-leucine from 3-methyl-2-oxobutanoate: step 2/4. Its function is as follows. Catalyzes the isomerization between 2-isopropylmalate and 3-isopropylmalate, via the formation of 2-isopropylmaleate. The sequence is that of 3-isopropylmalate dehydratase small subunit from Methylorubrum populi (strain ATCC BAA-705 / NCIMB 13946 / BJ001) (Methylobacterium populi).